A 700-amino-acid polypeptide reads, in one-letter code: Phenoloxidase 8 (700 aa).

A propeptide spanning residues 1–51 is cleaved from the precursor; it reads MATLTQKFHGLLQHPLEPLFLPKNDGTLFYDLPERFLTSRYSPIGQNLANR. Residues Asn-64 and Asn-198 are each glycosylated (N-linked (GlcNAc...) asparagine). His-223, His-227, and His-252 together coordinate Cu cation. A glycan (N-linked (GlcNAc...) asparagine) is linked at Asn-295. Glu-364 serves as the catalytic Proton acceptor. Cu cation is bound by residues His-379, His-383, and His-419. Residues Asn-445, Asn-507, and Asn-565 are each glycosylated (N-linked (GlcNAc...) asparagine). Cystine bridges form between Cys-592/Cys-636 and Cys-594/Cys-643.

The protein belongs to the tyrosinase family. As to quaternary structure, homodimer. Cu(2+) serves as cofactor. Upon activation, a trypsin type protease cleaves prophenol oxidase to yield the active enzyme.

It is found in the secreted. The catalysed reaction is 2 tyramine + O2 = 2 dopamine. It carries out the reaction 2 dopamine + O2 = 2 dopamine quinone + 2 H2O. In terms of biological role, this is a copper-containing oxidase that functions in the formation of pigments such as melanins and other polyphenolic compounds. Catalyzes the oxidation of o-diphenols such as dopamine. Also oxidizes monophenols such as tyramine. This Anopheles gambiae (African malaria mosquito) protein is Phenoloxidase 8.